The sequence spans 359 residues: 3-dehydroquinate synthase (359 aa).

NAD(+) contacts are provided by residues D70–K75, G105–D109, T129–T130, K142, K151, and F169–T172. Residues E184, H247, and H264 each contribute to the Zn(2+) site.

Belongs to the sugar phosphate cyclases superfamily. Dehydroquinate synthase family. Requires Co(2+) as cofactor. It depends on Zn(2+) as a cofactor. The cofactor is NAD(+).

It localises to the cytoplasm. It carries out the reaction 7-phospho-2-dehydro-3-deoxy-D-arabino-heptonate = 3-dehydroquinate + phosphate. It participates in metabolic intermediate biosynthesis; chorismate biosynthesis; chorismate from D-erythrose 4-phosphate and phosphoenolpyruvate: step 2/7. In terms of biological role, catalyzes the conversion of 3-deoxy-D-arabino-heptulosonate 7-phosphate (DAHP) to dehydroquinate (DHQ). In Francisella tularensis subsp. holarctica (strain OSU18), this protein is 3-dehydroquinate synthase.